The primary structure comprises 1105 residues: AP-3 complex subunit beta-1 (1105 aa).

2 disordered regions span residues 1-26 and 271-292; these read MSSNSFAYNEQSGGGEAAELGQEATS and KNFYESEEEEEEKEKSSRKKSY. Residues Ser-276 and Ser-610 each carry the phosphoserine modification. The segment at 668-824 is disordered; that stretch reads KKEKPMKKFY…KPQQERHPPS (157 aa). Residues 679–704 show a composition bias toward acidic residues; sequence ESEEEEDEDEDEDEEEEEKEDEDENP. 2 stretches are compositionally biased toward low complexity: residues 705-722 and 730-741; these read SDSSSDSESGSGSESGDT and DSSSGQDSETGS. Residues 750-759 are compositionally biased toward basic residues; the sequence is VAKRNSKTKR. Basic and acidic residues predominate over residues 760–774; it reads KSDSENREKKNENSK. Residues Ser-761 and Ser-763 each carry the phosphoserine modification. Over residues 775–788 the composition is skewed to low complexity; that stretch reads ASESSSEESSSMED. Over residues 789-799 the composition is skewed to acidic residues; that stretch reads SSSESESESGS. The segment covering 811–824 has biased composition (basic and acidic residues); the sequence is AKERKPQQERHPPS.

This sequence belongs to the adaptor complexes large subunit family. As to quaternary structure, adaptor protein complex 3 (AP-3) is a heterotetramer composed of two large adaptins (delta-type subunit AP3D1 and beta-type subunit AP3B1 or AP3B2), a medium adaptin (mu-type subunit AP3M1 or AP3M2) and a small adaptin (sigma-type subunit APS1 or AP3S2). AP-3 associates with the BLOC-1 complex. Interacts with KIF3A; interaction is direct; interaction is impaired by pyrophosphorylation of AP3B1. Post-translationally, phosphorylated on serine residues. In terms of processing, pyrophosphorylated by 5-diphosphoinositol pentakisphosphate (5-IP7). Pyrophosphorylation impairs interaction with KIF3A. Serine pyrophosphorylation is achieved by Mg(2+)-dependent, but enzyme independent transfer of a beta-phosphate from a inositol pyrophosphate to a pre-phosphorylated serine residue. In terms of tissue distribution, ubiquitously expressed.

The protein localises to the cytoplasmic vesicle. It localises to the clathrin-coated vesicle membrane. Its subcellular location is the golgi apparatus. Functionally, subunit of non-clathrin- and clathrin-associated adaptor protein complex 3 (AP-3) that plays a role in protein sorting in the late-Golgi/trans-Golgi network (TGN) and/or endosomes. The AP complexes mediate both the recruitment of clathrin to membranes and the recognition of sorting signals within the cytosolic tails of transmembrane cargo molecules. AP-3 appears to be involved in the sorting of a subset of transmembrane proteins targeted to lysosomes and lysosome-related organelles. In concert with the BLOC-1 complex, AP-3 is required to target cargos into vesicles assembled at cell bodies for delivery into neurites and nerve terminals. In Mus musculus (Mouse), this protein is AP-3 complex subunit beta-1 (Ap3b1).